The following is a 315-amino-acid chain: Type II methyltransferase M.Bsp6I (315 aa).

In terms of domain architecture, SAM-dependent MTase C5-type spans 2-315; that stretch reads LQIASLFAGV…IAENIYKSML (314 aa). Residue Cys-73 is part of the active site.

It belongs to the class I-like SAM-binding methyltransferase superfamily. C5-methyltransferase family.

The enzyme catalyses a 2'-deoxycytidine in DNA + S-adenosyl-L-methionine = a 5-methyl-2'-deoxycytidine in DNA + S-adenosyl-L-homocysteine + H(+). In terms of biological role, a methylase that recognizes the double-stranded sequence 5'-GCNGC-3', methylates C-? on both strands, and protects the DNA from cleavage by the Bsp6I endonuclease. The sequence is that of Type II methyltransferase M.Bsp6I from Bacillus sp. (strain RFL6).